The chain runs to 284 residues: Bifunctional protein FolD (284 aa).

Residue 166 to 168 coordinates NADP(+); that stretch reads GAS.

It belongs to the tetrahydrofolate dehydrogenase/cyclohydrolase family. In terms of assembly, homodimer.

The catalysed reaction is (6R)-5,10-methylene-5,6,7,8-tetrahydrofolate + NADP(+) = (6R)-5,10-methenyltetrahydrofolate + NADPH. The enzyme catalyses (6R)-5,10-methenyltetrahydrofolate + H2O = (6R)-10-formyltetrahydrofolate + H(+). Its pathway is one-carbon metabolism; tetrahydrofolate interconversion. In terms of biological role, catalyzes the oxidation of 5,10-methylenetetrahydrofolate to 5,10-methenyltetrahydrofolate and then the hydrolysis of 5,10-methenyltetrahydrofolate to 10-formyltetrahydrofolate. The sequence is that of Bifunctional protein FolD from Legionella pneumophila subsp. pneumophila (strain Philadelphia 1 / ATCC 33152 / DSM 7513).